A 206-amino-acid chain; its full sequence is FKBP-type 22 kDa peptidyl-prolyl cis-trans isomerase (206 aa).

The PPIase FKBP-type domain maps to 120–206; it reads TDRVRVHYTG…VFEVELLEIL (87 aa).

As to quaternary structure, homodimer.

It localises to the cytoplasm. Its subcellular location is the periplasm. The catalysed reaction is [protein]-peptidylproline (omega=180) = [protein]-peptidylproline (omega=0). Its activity is regulated as follows. Strongly inhibited by FK506. PPIases accelerate the folding of proteins. Catalyzes the cis-trans isomerization of proline imidic peptide bonds in oligopeptides. Displays a preference for substrates with a lysyl residue in the P1 position. This chain is FKBP-type 22 kDa peptidyl-prolyl cis-trans isomerase (fklB), found in Escherichia coli (strain K12).